A 150-amino-acid polypeptide reads, in one-letter code: Peptide deformylase 1 (150 aa).

The Fe cation site is built by Cys88 and His130. Glu131 is a catalytic residue. His134 serves as a coordination point for Fe cation.

This sequence belongs to the polypeptide deformylase family. Requires Fe(2+) as cofactor.

The enzyme catalyses N-terminal N-formyl-L-methionyl-[peptide] + H2O = N-terminal L-methionyl-[peptide] + formate. In terms of biological role, removes the formyl group from the N-terminal Met of newly synthesized proteins. Requires at least a dipeptide for an efficient rate of reaction. N-terminal L-methionine is a prerequisite for activity but the enzyme has broad specificity at other positions. This Clostridium acetobutylicum (strain ATCC 824 / DSM 792 / JCM 1419 / IAM 19013 / LMG 5710 / NBRC 13948 / NRRL B-527 / VKM B-1787 / 2291 / W) protein is Peptide deformylase 1.